We begin with the raw amino-acid sequence, 418 residues long: Tyrosine--tRNA ligase (418 aa).

L-tyrosine is bound at residue tyrosine 34. The short motif at 39 to 48 (PTADSLHLGH) is the 'HIGH' region element. L-tyrosine is bound by residues tyrosine 169 and glutamine 173. The short motif at 229 to 233 (KFGKS) is the 'KMSKS' region element. Lysine 232 provides a ligand contact to ATP. In terms of domain architecture, S4 RNA-binding spans 352–418 (LNIVDMLVTA…GKKKYAVLTY (67 aa)).

The protein belongs to the class-I aminoacyl-tRNA synthetase family. TyrS type 1 subfamily. As to quaternary structure, homodimer.

It localises to the cytoplasm. It carries out the reaction tRNA(Tyr) + L-tyrosine + ATP = L-tyrosyl-tRNA(Tyr) + AMP + diphosphate + H(+). Its function is as follows. Catalyzes the attachment of tyrosine to tRNA(Tyr) in a two-step reaction: tyrosine is first activated by ATP to form Tyr-AMP and then transferred to the acceptor end of tRNA(Tyr). In Streptococcus equi subsp. zooepidemicus (strain MGCS10565), this protein is Tyrosine--tRNA ligase.